The following is a 250-amino-acid chain: MPRYKLVIEYDGAPFRGWQRQADDPTVQAAIETAVTRFSGETARLTCAGRTDAGVHAIHQVAHLDLAKDWRTDTVRDALNAHLRPQPVSILSAEVVPQEFDARHSAIRRHYRYRILNRRSPAALTRAHVWQVPWPLDAELMHRAAQRLLGHHDFSAFRAAECQAKSPMRTLEQLDVTRERMGLFEEIVIATSARSFLHHQVRAMAGTLMLAGCKRLSADDVAEILATGAKHRCGPLAPACGLTFVGVDYL.

The active-site Nucleophile is the D52. Residue Y111 participates in substrate binding.

It belongs to the tRNA pseudouridine synthase TruA family. As to quaternary structure, homodimer.

The catalysed reaction is uridine(38/39/40) in tRNA = pseudouridine(38/39/40) in tRNA. Formation of pseudouridine at positions 38, 39 and 40 in the anticodon stem and loop of transfer RNAs. The polypeptide is tRNA pseudouridine synthase A (Methylorubrum extorquens (strain CM4 / NCIMB 13688) (Methylobacterium extorquens)).